The primary structure comprises 343 residues: Anthranilate phosphoribosyltransferase (343 aa).

5-phospho-alpha-D-ribose 1-diphosphate is bound by residues glycine 78, 81-82 (GD), threonine 86, 88-91 (NIST), 106-114 (KHGNRSVSS), and serine 118. Glycine 78 is a binding site for anthranilate. Residue serine 90 participates in Mg(2+) binding. Residue asparagine 109 coordinates anthranilate. Arginine 164 provides a ligand contact to anthranilate. Residues aspartate 223 and glutamate 224 each contribute to the Mg(2+) site.

This sequence belongs to the anthranilate phosphoribosyltransferase family. In terms of assembly, homodimer. Mg(2+) is required as a cofactor.

It carries out the reaction N-(5-phospho-beta-D-ribosyl)anthranilate + diphosphate = 5-phospho-alpha-D-ribose 1-diphosphate + anthranilate. It functions in the pathway amino-acid biosynthesis; L-tryptophan biosynthesis; L-tryptophan from chorismate: step 2/5. In terms of biological role, catalyzes the transfer of the phosphoribosyl group of 5-phosphorylribose-1-pyrophosphate (PRPP) to anthranilate to yield N-(5'-phosphoribosyl)-anthranilate (PRA). The chain is Anthranilate phosphoribosyltransferase from Chlamydia felis (strain Fe/C-56) (Chlamydophila felis).